The sequence spans 448 residues: C4-dicarboxylate transport protein 2 (448 aa).

9 consecutive transmembrane segments (helical) span residues Ser13–Pro33, Leu49–Met69, Leu81–Val101, Ala149–Leu169, Ile193–Ile213, Leu227–Ser247, Val294–Leu314, Ile335–Gly355, and Ile357–Ile377.

This sequence belongs to the dicarboxylate/amino acid:cation symporter (DAACS) (TC 2.A.23) family.

The protein localises to the cell inner membrane. In terms of biological role, responsible for the transport of dicarboxylates such as succinate, fumarate, and malate from the periplasm across the membrane. The polypeptide is C4-dicarboxylate transport protein 2 (Polaromonas naphthalenivorans (strain CJ2)).